The following is a 60-amino-acid chain: Large ribosomal subunit protein uL30 (60 aa).

It belongs to the universal ribosomal protein uL30 family. Part of the 50S ribosomal subunit.

This chain is Large ribosomal subunit protein uL30, found in Syntrophomonas wolfei subsp. wolfei (strain DSM 2245B / Goettingen).